The primary structure comprises 161 residues: MGCCYSSENEDSDQDQEERKLLLDPSNTPTKALNGAEPSYHSLPSARTDEQALLSSILAKTASNIIDVSAADSQGMEQHEYMDRARQYSTRLAVLSSSLTHWKKLPPLPSLTSQPHQVLASEPIPFSDLQQVSRIAAYAYSALSQIRVDAKEELVVQFGIP.

Positions 1–43 (MGCCYSSENEDSDQDQEERKLLLDPSNTPTKALNGAEPSYHSL) are disordered. Residue G2 is the site of N-myristoyl glycine attachment. Residues C3 and C4 are each lipidated (S-palmitoyl cysteine). Residue K20 forms a Glycyl lysine isopeptide (Lys-Gly) (interchain with G-Cter in ubiquitin) linkage. T28 carries the phosphothreonine modification. A Glycyl lysine isopeptide (Lys-Gly) (interchain with G-Cter in ubiquitin) cross-link involves residue K31. Residues S42 and S56 each carry the phosphoserine modification. K60 participates in a covalent cross-link: Glycyl lysine isopeptide (Lys-Gly) (interchain with G-Cter in ubiquitin). S98 bears the Phosphoserine mark. Residues K103 and K104 each participate in a glycyl lysine isopeptide (Lys-Gly) (interchain with G-Cter in ubiquitin) cross-link. Residues 121–161 (SEPIPFSDLQQVSRIAAYAYSALSQIRVDAKEELVVQFGIP) are interaction with LAMTOR2 and LAMTOR3. A Phosphoserine modification is found at S141.

Belongs to the LAMTOR1 family. In terms of assembly, part of the Ragulator complex composed of LAMTOR1, LAMTOR2, LAMTOR3, LAMTOR4 and LAMTOR5. LAMTOR4 and LAMTOR5 form a heterodimer that interacts, through LAMTOR1, with a LAMTOR2, LAMTOR3 heterodimer. Interacts with LAMTOR2 and LAMTOR3; the interaction is direct. The Ragulator complex interacts with both the mTORC1 complex and heterodimers constituted of the Rag GTPases RagA/RRAGA, RagB/RRAGB, RagC/RRAGC and RagD/RRAGD; regulated by amino acid availability. The Ragulator complex interacts with SLC38A9; the probable amino acid sensor. Component of the lysosomal folliculin complex (LFC), composed of FLCN, FNIP1 (or FNIP2), RagA/RRAGA or RagB/RRAGB GDP-bound, RagC/RRAGC or RagD/RRAGD GTP-bound, and Ragulator. Associates with the lysosomal V-ATPase complex; interaction promotes the guanine nucleotide exchange factor (GEF) of the Ragulator complex. Interacts with MMP14. Interacts with CDKN1B; prevents the interaction of CDKN1B with RHOA leaving RHOA in a form accessible to activation by ARHGEF2. Interacts with PIP4P1. In terms of processing, N-terminal myristoylation and palmitoylation mediates its recruitment to lysosome membranes, thereby promoting localization of the Ragulator complex to lysosomes. N-myristoylation by NMT1 is required for palmitoylation at Cys-3 and Cys-4. May be palmitoylated by ZDHHC3. Ubiquitinated at Lys-60, Lys-103 and Lys-104 by UBE3A, promoting its degradation by the proteasome. Ubiquitination at Lys-20 impairs the association with the lysosomal V-ATPase complex. Deubiquitination at Lys-20 by USP32 promotes the association with the lysosomal V-ATPase complex and subsequent activation of the mTORC1 complex. Ubiquitously expressed.

It localises to the lysosome membrane. Its subcellular location is the late endosome membrane. Key component of the Ragulator complex, a multiprotein complex involved in amino acid sensing and activation of mTORC1, a signaling complex promoting cell growth in response to growth factors, energy levels, and amino acids. Activated by amino acids through a mechanism involving the lysosomal V-ATPase, the Ragulator plays a dual role for the small GTPases Rag (RagA/RRAGA, RagB/RRAGB, RagC/RRAGC and/or RagD/RRAGD): it (1) acts as a guanine nucleotide exchange factor (GEF), activating the small GTPases Rag and (2) mediates recruitment of Rag GTPases to the lysosome membrane. Activated Ragulator and Rag GTPases function as a scaffold recruiting mTORC1 to lysosomes where it is in turn activated. LAMTOR1 is directly responsible for anchoring the Ragulator complex to the lysosomal membrane. LAMTOR1 wraps around the other subunits of the Ragulator complex to hold them in place and interacts with the Rag GTPases, thereby playing a key role in the recruitment of the mTORC1 complex to lysosomes. Also involved in the control of embryonic stem cells differentiation via non-canonical RagC/RRAGC and RagD/RRAGD activation: together with FLCN, it is necessary to recruit and activate RagC/RRAGC and RagD/RRAGD at the lysosomes, and to induce exit of embryonic stem cells from pluripotency via non-canonical, mTOR-independent TFE3 inactivation. Also required for late endosomes/lysosomes biogenesis it may regulate both the recycling of receptors through endosomes and the MAPK signaling pathway through recruitment of some of its components to late endosomes. May be involved in cholesterol homeostasis regulating LDL uptake and cholesterol release from late endosomes/lysosomes. May also play a role in RHOA activation. The chain is Ragulator complex protein LAMTOR1 (Lamtor1) from Rattus norvegicus (Rat).